A 232-amino-acid chain; its full sequence is MKKLLVIDFREKIKYEDAWDLQKKLHDLRVKDTIYDTLILLEHFPVITLGKFGDEKNLLKTKEELKSMGIDFIRVDRGGDITYHGPSQLVGYFIFKVDGVKNFVLKVEKSIINVLHEYGIEAKESIEYPGVWVEDRKITAIGIAIKKRVSYHGFALNVNNDLAPFSYIIPCGLKDKKVTSILKEANFSPPMEDVKRKVCLSVVKEFGFDSFMVFNFSSCKELSNFGMLLEDL.

A BPL/LPL catalytic domain is found at Asp-32–Cys-219. Substrate-binding positions include Arg-77–His-84, Ala-140–Gly-142, and Gly-153–Ala-155. The Acyl-thioester intermediate role is filled by Cys-171.

This sequence belongs to the LipB family.

The protein localises to the cytoplasm. The catalysed reaction is octanoyl-[ACP] + L-lysyl-[protein] = N(6)-octanoyl-L-lysyl-[protein] + holo-[ACP] + H(+). It functions in the pathway protein modification; protein lipoylation via endogenous pathway; protein N(6)-(lipoyl)lysine from octanoyl-[acyl-carrier-protein]: step 1/2. Functionally, catalyzes the transfer of endogenously produced octanoic acid from octanoyl-acyl-carrier-protein onto the lipoyl domains of lipoate-dependent enzymes. Lipoyl-ACP can also act as a substrate although octanoyl-ACP is likely to be the physiological substrate. This Dictyoglomus thermophilum (strain ATCC 35947 / DSM 3960 / H-6-12) protein is Octanoyltransferase.